We begin with the raw amino-acid sequence, 271 residues long: Glutamate racemase (271 aa).

Substrate-binding positions include 12–13 (DS) and 44–45 (YG). Cys-75 serves as the catalytic Proton donor/acceptor. Residue 76–77 (NT) participates in substrate binding. Cys-185 (proton donor/acceptor) is an active-site residue. 186 to 187 (TH) contacts substrate.

Belongs to the aspartate/glutamate racemases family.

The catalysed reaction is L-glutamate = D-glutamate. The protein operates within cell wall biogenesis; peptidoglycan biosynthesis. In terms of biological role, provides the (R)-glutamate required for cell wall biosynthesis. This is Glutamate racemase from Methylococcus capsulatus (strain ATCC 33009 / NCIMB 11132 / Bath).